The primary structure comprises 62 residues: Large ribosomal subunit protein bL32 (62 aa).

The segment covering 1–19 has biased composition (basic residues); that stretch reads MAVPKRKTSKTRRDKRRAS. Residues 1–20 are disordered; that stretch reads MAVPKRKTSKTRRDKRRASS.

This sequence belongs to the bacterial ribosomal protein bL32 family.

In Finegoldia magna (strain ATCC 29328 / DSM 20472 / WAL 2508) (Peptostreptococcus magnus), this protein is Large ribosomal subunit protein bL32.